The primary structure comprises 355 residues: Adenine deaminase (355 aa).

His-24, His-26, and His-204 together coordinate Zn(2+). Glu-207 (proton donor) is an active-site residue. Asp-285 contributes to the Zn(2+) binding site. Asp-286 is a substrate binding site.

This sequence belongs to the metallo-dependent hydrolases superfamily. Adenosine and AMP deaminases family. Adenine deaminase type 2 subfamily. It depends on Zn(2+) as a cofactor.

The enzyme catalyses adenine + H2O + H(+) = hypoxanthine + NH4(+). Catalyzes the hydrolytic deamination of adenine to hypoxanthine. Plays an important role in the purine salvage pathway and in nitrogen catabolism. The chain is Adenine deaminase from Geotalea uraniireducens (strain Rf4) (Geobacter uraniireducens).